Here is a 448-residue protein sequence, read N- to C-terminus: Phosphoglucosamine mutase (448 aa).

Ser-102 (phosphoserine intermediate) is an active-site residue. Mg(2+) contacts are provided by Ser-102, Asp-241, Asp-243, and Asp-245. Ser-102 is subject to Phosphoserine.

This sequence belongs to the phosphohexose mutase family. The cofactor is Mg(2+). Post-translationally, activated by phosphorylation.

The catalysed reaction is alpha-D-glucosamine 1-phosphate = D-glucosamine 6-phosphate. In terms of biological role, catalyzes the conversion of glucosamine-6-phosphate to glucosamine-1-phosphate. This is Phosphoglucosamine mutase from Ruegeria pomeroyi (strain ATCC 700808 / DSM 15171 / DSS-3) (Silicibacter pomeroyi).